A 199-amino-acid polypeptide reads, in one-letter code: Putative ATP-dependent Clp protease proteolytic subunit-like (199 aa).

It belongs to the peptidase S14 family. In terms of assembly, component of the chloroplastic Clp protease core complex.

It localises to the plastid. It is found in the cyanelle. Has lost the two conserved residues (Ser and His) proposed to be part of the active site. Therefore it could be inactive. In Cyanophora paradoxa, this protein is Putative ATP-dependent Clp protease proteolytic subunit-like (clpP-B).